The chain runs to 722 residues: MGRRSALALAVVSALLCQVWSSGVFELKLQEFVNKKGLLGNRNCCRGGSGPPCACRTFFRVCLKHYQASVSPEPPCTYGSAVTPVLGVDSFSLPDGAGIDPAFSNPIRFPFGFTWPGTFSLIIEALHTDSPDDLATENPERLISRLTTQRHLTVGEEWSQDLHSSGRTDLRYSYRFVCDEHYYGEGCSVFCRPRDDAFGHFTCGDRGEKMCDPGWKGQYCTDPICLPGCDDQHGYCDKPGECKCRVGWQGRYCDECIRYPGCLHGTCQQPWQCNCQEGWGGLFCNQDLNYCTHHKPCRNGATCTNTGQGSYTCSCRPGYTGANCELEVDECAPSPCKNGASCTDLEDSFSCTCPPGFYGKVCELSAMTCADGPCFNGGRCSDNPDGGYTCHCPLGFSGFNCEKKMDLCGSSPCSNGAKCVDLGNSYLCRCQAGFSGRYCEDNVDDCASSPCANGGTCRDSVNDFSCTCPPGYTGKNCSAPVSRCEHAPCHNGATCHQRGQRYMCECAQGYGGPNCQFLLPEPPPGPMVVDLSERHMESQGGPFPWVAVCAGVVLVLLLLLGCAAVVVCVRLKLQKHQPPPEPCGGETETMNNLANCQREKDVSVSIIGATQIKNTNKKADFHGDHGAEKSSFKVRYPTVDYNLVRDLKGDEATVRDTHSKRDTKCQSQSSAGEEKIAPTLRGGEIPDRKRPESVYSTSKDTKYQSVYVLSAEKDECVIATEV.

Positions 1 to 17 are cleaved as a signal peptide; sequence MGRRSALALAVVSALLC. Topologically, residues 18–545 are extracellular; that stretch reads QVWSSGVFEL…MESQGGPFPW (528 aa). In terms of domain architecture, DSL spans 176-220; that stretch reads FVCDEHYYGEGCSVFCRPRDDAFGHFTCGDRGEKMCDPGWKGQYC. Intrachain disulfides connect cysteine 178/cysteine 187, cysteine 191/cysteine 203, cysteine 211/cysteine 220, cysteine 225/cysteine 236, cysteine 229/cysteine 242, cysteine 244/cysteine 253, cysteine 256/cysteine 267, cysteine 262/cysteine 273, cysteine 275/cysteine 284, cysteine 291/cysteine 303, cysteine 297/cysteine 313, cysteine 315/cysteine 324, cysteine 331/cysteine 342, cysteine 336/cysteine 351, cysteine 353/cysteine 362, cysteine 369/cysteine 380, cysteine 374/cysteine 390, cysteine 392/cysteine 401, cysteine 408/cysteine 419, cysteine 413/cysteine 428, cysteine 430/cysteine 439, cysteine 446/cysteine 457, cysteine 451/cysteine 466, cysteine 468/cysteine 477, cysteine 484/cysteine 495, cysteine 489/cysteine 504, and cysteine 506/cysteine 515. 3 consecutive EGF-like domains span residues 225–253, 256–284, and 291–324; these read CLPG…GRYC, CIRY…GLFC, and CTHH…GANC. The EGF-like 4; calcium-binding domain maps to 331–362; sequence CAPSPCKNGASCTDLEDSFSCTCPPGFYGKVC. EGF-like domains lie at 369-401 and 408-439; these read CADG…GFNC and CGSS…GRYC. The 32-residue stretch at 446–477 folds into the EGF-like 7; calcium-binding domain; sequence CASSPCANGGTCRDSVNDFSCTCPPGYTGKNC. Asparagine 476 carries N-linked (GlcNAc...) asparagine glycosylation. Residues 484-515 form the EGF-like 8 domain; sequence CEHAPCHNGATCHQRGQRYMCECAQGYGGPNC. A helical membrane pass occupies residues 546–568; the sequence is VAVCAGVVLVLLLLLGCAAVVVC. Over 569-722 the chain is Cytoplasmic; the sequence is VRLKLQKHQP…KDECVIATEV (154 aa). Lysine 613 is covalently cross-linked (Glycyl lysine isopeptide (Lys-Gly) (interchain with G-Cter in ubiquitin)). Threonine 638 carries the phosphothreonine modification. Over residues 655-664 the composition is skewed to basic and acidic residues; sequence RDTHSKRDTK. The interval 655-697 is disordered; it reads RDTHSKRDTKCQSQSSAGEEKIAPTLRGGEIPDRKRPESVYST. Serine 693 bears the Phosphoserine; by PKB mark. Serine 696 is subject to Phosphoserine. Residues 719-722 form an interaction with MAGI1 region; it reads ATEV.

Homodimer. Interacts with TJP1. Interacts with MMP14; inhibits DLL1-induced Notch signaling. Interacts with MAGI1 (via PDZ domain); forms a complex with CTNNB1 and CDH2 and promotes recruitment to the adherens junction and stabilization on the cell surface. Interacts with PSEN1; undergoes a presenilin-dependent gamma-secretase cleavage that releases a Dll1-intracellular form. Interacts with MFAP5. Interacts with MIB1. Interacts with NEURL1B; leads to ubiquitination. Interacts with NEURL1. Interacts with SYNJ2BP; enhances DLL1 protein stability, and promotes Notch signaling in endothelial cells. Interacts with MAGI1, MAGI2, MAGI3 and MPDZ. Interacts (via ubiquitin) with EPN1 (via IUM domain); binding with NOTCH1 attached to neighboring cell, promotes ligand ubiquitination and EPN1 interaction, leading to NECD transendocytosis and Notch signaling. Interacts with NOTCH1. Post-translationally, ubiquitinated by MIB (MIB1 or MIB2), leading to its endocytosis and subsequent degradation. Ubiquitinated; promotes recycling back to the plasma membrane and confers a strong affinity for NOTCH1. Multi-ubiquitination of Lys-613 by MIB1 promotes both cis and trans-interaction with NOTCH1, as well as activation of Notch signaling. Ubiquitinated by NEURL1B. In terms of processing, phosphorylated in a membrane association-dependent manner. Phosphorylation at Ser-696 requires the presence of Ser-693, whereas phosphorylation at Thr-638 and Ser-693 occurs independently of the other sites. Phosphorylation is required for full ligand activity in vitro and affects surface presentation, ectodomain shedding, and endocytosis. Cleaved by MMP14; negatively regulates DLL1-induced Notch signaling in HPCs, modulating B-lymphocyte differentiation in bone marrow. Undergoes two consecutive processing events: a shedding event, partially by ADAM10, that generates a soluble extracellular form and an intracellular membrane-anchored form, followed by a gamma-secretase cleavage releasing an intracellular fragment. Post-translationally, O-fucosylated. Can be elongated to a disaccharide by MFNG. In the embryo, expressed in the paraxial mesoderm and nervous system. Expressed at high levels in adult heart and at lower levels, in adult lung. Highly expressed in satellite cells from masseter and tongue than in satellite cells from leg and extraocular muscle.?.

The protein localises to the apical cell membrane. Its subcellular location is the cell junction. It is found in the adherens junction. It localises to the membrane raft. The protein resides in the cell membrane. The protein localises to the nucleus. Transmembrane ligand protein of NOTCH1, NOTCH2 and NOTCH3 receptors that binds the extracellular domain (ECD) of Notch receptor in a cis and trans fashion manner. Following transinteraction, ligand cells produce mechanical force that depends of a clathrin-mediated endocytosis, requiring ligand ubiquitination, EPN1 interaction, and actin polymerisation; these events promote Notch receptor extracellular domain (NECD) transendocytosis and triggers Notch signaling through induction of cleavage, hyperphosphorylation, and nuclear accumulation of the intracellular domain of Notch receptors (NICD). Is required for embryonic development and maintenance of adult stem cells in many different tissues and immune systeme; the DLL1-induced Notch signaling is mediated through an intercellular communication that regulates cell lineage, cell specification, cell patterning and morphogenesis through effects on differentiation and proliferation. Plays a role in brain development at different level, namely by regulating neuronal differentiation of neural precursor cells via cell-cell interaction, most likely through the lateral inhibitory system in an endogenous level dependent-manner. During neocortex development, Dll1-Notch signaling transmission is mediated by dynamic interactions between intermediate neurogenic progenitors and radial glia; the cell-cell interactions are mediated via dynamic and transient elongation processes, likely to reactivate/maintain Notch activity in neighboring progenitors, and coordinate progenitor cell division and differentiation across radial and zonal boundaries. During cerebellar development, regulates Bergmann glial monolayer formation and its morphological maturation through a Notch signaling pathway. At the retina and spinal cord level, regulates neurogenesis by preventing the premature differentiation of neural progenitors and also by maintaining progenitors in spinal cord through Notch signaling pathway. Also controls neurogenesis of the neural tube in a progenitor domain-specific fashion along the dorsoventral axis. Maintains quiescence of neural stem cells and plays a role as a fate determinant that segregates asymmetrically to one daughter cell during neural stem cells mitosis, resulting in neuronal differentiation in Dll1-inheriting cell. Plays a role in immune systeme development, namely the development of all T-cells and marginal zone (MZ) B cells. Blocks the differentiation of progenitor cells into the B-cell lineage while promoting the emergence of a population of cells with the characteristics of a T-cell/NK-cell precursor. Upon MMP14 cleavage, negatively regulates Notch signaling in haematopoietic progenitor cells to specifically maintain normal B-cell development in bone marrow. Also plays a role during muscle development. During early development, inhibits myoblasts differentiation from the medial dermomyotomal lip and later regulates progenitor cell differentiation. Directly modulates cell adhesion and basal lamina formation in satellite cells through Notch signaling. Maintains myogenic progenitors pool by suppressing differentiation through down-regulation of MYOD1 and is required for satellite cell homing and PAX7 expression. During craniofacial and trunk myogenesis suppresses differentiation of cranial mesoderm-derived and somite-derived muscle via MYOD1 regulation but in cranial mesoderm-derived progenitors, is neither required for satellite cell homing nor for PAX7 expression. Also plays a role during pancreatic cell development. During type B pancreatic cell development, may be involved in the initiation of proximodistal patterning in the early pancreatic epithelium. Stimulates multipotent pancreatic progenitor cells proliferation and pancreatic growth by maintaining HES1 expression and PTF1A protein levels. During fetal stages of development, is required to maintain arterial identity and the responsiveness of arterial endothelial cells for VEGFA through regulation of KDR activation and NRP1 expression. Controls sprouting angiogenesis and subsequent vertical branch formation through regulation on tip cell differentiation. Negatively regulates goblet cell differentiation in intestine and controls secretory fat commitment through lateral inhibition in small intestine. Plays a role during inner ear development; negatively regulates auditory hair cell differentiation. Plays a role during nephron development through Notch signaling pathway. Regulates growth, blood pressure and energy homeostasis. The protein is Delta-like protein 1 (Dll1) of Mus musculus (Mouse).